The following is a 412-amino-acid chain: GATOR complex protein NPRL2 (412 aa).

This sequence belongs to the NPR2 family. In terms of assembly, component of the GATOR complex consisting of mio, Nup44A/Seh1, Im11, Nplr3, Nplr2, Wdr24, Wdr59 and Sec13. Within the GATOR complex, probable component of the GATOR1 subcomplex which is likely composed of Iml1, Nplr2 and Nplr3. Interacts with Nprl3.

The protein resides in the cytoplasm. The protein localises to the lysosome. An essential component of the GATOR subcomplex GATOR1 which functions as an inhibitor of the amino acid-sensing branch of the TORC1 signaling pathway. The two GATOR subcomplexes, GATOR1 and GATOR2, regulate the TORC1 pathway in order to mediate metabolic homeostasis, female gametogenesis and the response to amino acid limitation and complete starvation. The function of GATOR1 in negatively regulating the TORC1 pathway is essential for maintaining baseline levels of TORC1 activity under nutrient rich conditions, and for promoting survival during amino acid or complete starvation by inhibiting TORC1-dependent cell growth and promoting catabolic metabolism and autophagy. In addition, this inhibition of TORC1 is necessary to maintain female fertility under normal conditions and during periods of nutrient stress. GATOR1 and GATOR2 act at different stages of oogenesis to regulate TORC1 in order to control meiotic entry and promote oocyte growth and development. After exactly four mitotic cyst divisions, the GATOR1 complex members (Iml1, Nprl2 and Nprl3) down-regulate TORC1 to slow cellular metabolism and promote the mitotic/meiotic transition. At later stages of oogenesis, the mio and Nup44A components of the GATOR2 complex inhibit GATOR1 and thus activate TORC1 to promote meiotic progression, and drive oocyte growth and development. The polypeptide is GATOR complex protein NPRL2 (Drosophila melanogaster (Fruit fly)).